The sequence spans 866 residues: DNA topoisomerase 3-beta (866 aa).

The Toprim domain occupies 4–149 (TVLMVAEKPS…RIFRAKFSSV (146 aa)). Mg(2+)-binding residues include E10, D114, and D116. The Topo IA-type catalytic domain occupies 165-585 (SKDEALAVDA…HVLQQFMKKY (421 aa)). The interaction with DNA stretch occupies residues 207 to 212 (SYGPCQ). The active-site O-(5'-phospho-DNA)-tyrosine intermediate is the Y329. The segment covering 830–853 (MRRGRGRGRGRGRGRGSSRGRRGS) has biased composition (basic residues). Residues 830–866 (MRRGRGRGRGRGRGRGSSRGRRGSSRHDDPKMSFRDF) form a disordered region. Residues 854–866 (SRHDDPKMSFRDF) show a composition bias toward basic and acidic residues.

This sequence belongs to the type IA topoisomerase family. Mg(2+) is required as a cofactor.

The catalysed reaction is ATP-independent breakage of single-stranded DNA, followed by passage and rejoining.. In terms of biological role, releases the supercoiling and torsional tension of DNA introduced during the DNA replication and transcription by transiently cleaving and rejoining one strand of the DNA duplex. Introduces a single-strand break via transesterification at a target site in duplex DNA. The scissile phosphodiester is attacked by the catalytic tyrosine of the enzyme, resulting in the formation of a DNA-(5'-phosphotyrosyl)-enzyme intermediate and the expulsion of a 3'-OH DNA strand. The free DNA strand than undergoes passage around the unbroken strand thus removing DNA supercoils. Finally, in the religation step, the DNA 3'-OH attacks the covalent intermediate to expel the active-site tyrosine and restore the DNA phosphodiester backbone. The protein is DNA topoisomerase 3-beta (TOP3B) of Oryza sativa subsp. japonica (Rice).